We begin with the raw amino-acid sequence, 104 residues long: Large ribosomal subunit protein uL24 (104 aa).

It belongs to the universal ribosomal protein uL24 family. Part of the 50S ribosomal subunit.

One of two assembly initiator proteins, it binds directly to the 5'-end of the 23S rRNA, where it nucleates assembly of the 50S subunit. In terms of biological role, one of the proteins that surrounds the polypeptide exit tunnel on the outside of the subunit. The chain is Large ribosomal subunit protein uL24 from Shewanella amazonensis (strain ATCC BAA-1098 / SB2B).